Reading from the N-terminus, the 88-residue chain is MQAARFVVSGVVQGVWYRASTRQRAVALGLVGHARNQADGSVEVVAAGSAAALDALEAWLWQGPPAATVAAVTRTACAVPPTEDFVTG.

The region spanning 3–88 (AARFVVSGVV…VPPTEDFVTG (86 aa)) is the Acylphosphatase-like domain. Catalysis depends on residues R18 and N36.

Belongs to the acylphosphatase family.

It catalyses the reaction an acyl phosphate + H2O = a carboxylate + phosphate + H(+). The protein is Acylphosphatase (acyP) of Xanthomonas euvesicatoria pv. vesicatoria (strain 85-10) (Xanthomonas campestris pv. vesicatoria).